Consider the following 867-residue polypeptide: Schizokinen transporter SchT (867 aa).

The tract at residues 40 to 62 (HPGKTQEAPSPTQLNTQSPAPNA) is disordered. The segment covering 46–62 (EAPSPTQLNTQSPAPNA) has biased composition (polar residues). Residues 185-192 (IELVVTAT) carry the TonB box motif. Positions 197–307 (PIQNVPRSIT…TGGVINIITR (111 aa)) constitute a TBDR plug domain. The TBDR beta-barrel domain occupies 313-867 (KLTSRTEVGV…TLSIKYSFDW (555 aa)). The short motif at 850 to 867 (AYAAARGRTLSIKYSFDW) is the TonB C-terminal box element.

Belongs to the TonB-dependent receptor family.

The protein resides in the cell outer membrane. Involved in the TonB-dependent uptake of iron in complex with schizokinen, a dihydroxamate-type siderophore. This Nostoc sp. (strain PCC 7120 / SAG 25.82 / UTEX 2576) protein is Schizokinen transporter SchT.